Consider the following 1146-residue polypeptide: Ankyrin repeat domain-containing protein 24 (1146 aa).

ANK repeat units lie at residues E81–S110, A114–V143, S147–P176, S180–D209, and Q213–I242. Disordered stretches follow at residues R272 to R320, R607 to A627, and E766 to T785. Residues E286–G297 show a composition bias toward polar residues. Residues R320–E517 are a coiled coil. Positions A714–A1110 form a coiled coil.

As to quaternary structure, homodimer. Interacts (via C-terminal domain) with TRIOBP (via C-terminal domain) isoform 4; recruits TRIOBP isoform 4 to stereocilia rootlets.

It is found in the cell membrane. The protein resides in the cell projection. The protein localises to the stereocilium. Its function is as follows. Component of the stereocilia rootlet in hair cells of inner ear. Bridges the apical plasma membrane with the lower rootlet and maintains normal distribution of TRIOBP, thereby reinforcing stereocilia insertion points and organizing rootlets for hearing with long-term resilience. In Homo sapiens (Human), this protein is Ankyrin repeat domain-containing protein 24.